Consider the following 413-residue polypeptide: Multifunctional CCA protein (413 aa).

The ATP site is built by G8 and R11. CTP contacts are provided by G8 and R11. Residues E21 and D23 each coordinate Mg(2+). ATP is bound by residues R91, R137, and R140. CTP is bound by residues R91, R137, and R140. The HD domain maps to 228 to 329; sequence TGEHTLLALA…LKLLEGLDLF (102 aa).

This sequence belongs to the tRNA nucleotidyltransferase/poly(A) polymerase family. Bacterial CCA-adding enzyme type 1 subfamily. As to quaternary structure, monomer. Can also form homodimers and oligomers. Requires Mg(2+) as cofactor. The cofactor is Ni(2+).

It carries out the reaction a tRNA precursor + 2 CTP + ATP = a tRNA with a 3' CCA end + 3 diphosphate. The enzyme catalyses a tRNA with a 3' CCA end + 2 CTP + ATP = a tRNA with a 3' CCACCA end + 3 diphosphate. Catalyzes the addition and repair of the essential 3'-terminal CCA sequence in tRNAs without using a nucleic acid template. Adds these three nucleotides in the order of C, C, and A to the tRNA nucleotide-73, using CTP and ATP as substrates and producing inorganic pyrophosphate. tRNA 3'-terminal CCA addition is required both for tRNA processing and repair. Also involved in tRNA surveillance by mediating tandem CCA addition to generate a CCACCA at the 3' terminus of unstable tRNAs. While stable tRNAs receive only 3'-terminal CCA, unstable tRNAs are marked with CCACCA and rapidly degraded. The polypeptide is Multifunctional CCA protein (Alkalilimnicola ehrlichii (strain ATCC BAA-1101 / DSM 17681 / MLHE-1)).